A 114-amino-acid chain; its full sequence is uncharacterized protein (114 aa).

This sequence to E.coli YfiI and P.aeruginosa RluD.

This is an uncharacterized protein from Escherichia coli O6:H1 (strain CFT073 / ATCC 700928 / UPEC).